The following is a 140-amino-acid chain: Small ribosomal subunit protein uS8c (140 aa).

Belongs to the universal ribosomal protein uS8 family. As to quaternary structure, part of the 30S ribosomal subunit.

The protein localises to the plastid. It is found in the chloroplast. Functionally, one of the primary rRNA binding proteins, it binds directly to 16S rRNA central domain where it helps coordinate assembly of the platform of the 30S subunit. This Euglena gracilis protein is Small ribosomal subunit protein uS8c (rps8).